The following is a 211-amino-acid chain: MKKMIDYSVYLVLDPELCGGLDGMLRVTEAAMAGGAGVVQLRAPQWKKRQWLDAARALQPLCRQGGAVFVVNDQVDVALAVGADGVHVGQQDLPVAVVRELMGPQALIGLSVNHAGQLAAVPSEADYLGLGPVFATSTKKDAAPVLGLAQLAGLAAATSLPTVGIGGIAPANAGAVFAAGVDGVAVVSAICTAADPAAVTRELYALKGHTA.

4-amino-2-methyl-5-(diphosphooxymethyl)pyrimidine-binding positions include 40–42 (QLR) and N72. Mg(2+)-binding residues include D73 and D92. S111 is a binding site for 4-amino-2-methyl-5-(diphosphooxymethyl)pyrimidine. Position 136–138 (136–138 (TST)) interacts with 2-[(2R,5Z)-2-carboxy-4-methylthiazol-5(2H)-ylidene]ethyl phosphate. 4-amino-2-methyl-5-(diphosphooxymethyl)pyrimidine is bound at residue K139. Residues G167 and 187–188 (VS) contribute to the 2-[(2R,5Z)-2-carboxy-4-methylthiazol-5(2H)-ylidene]ethyl phosphate site.

The protein belongs to the thiamine-phosphate synthase family. Requires Mg(2+) as cofactor.

It carries out the reaction 2-[(2R,5Z)-2-carboxy-4-methylthiazol-5(2H)-ylidene]ethyl phosphate + 4-amino-2-methyl-5-(diphosphooxymethyl)pyrimidine + 2 H(+) = thiamine phosphate + CO2 + diphosphate. The enzyme catalyses 2-(2-carboxy-4-methylthiazol-5-yl)ethyl phosphate + 4-amino-2-methyl-5-(diphosphooxymethyl)pyrimidine + 2 H(+) = thiamine phosphate + CO2 + diphosphate. The catalysed reaction is 4-methyl-5-(2-phosphooxyethyl)-thiazole + 4-amino-2-methyl-5-(diphosphooxymethyl)pyrimidine + H(+) = thiamine phosphate + diphosphate. The protein operates within cofactor biosynthesis; thiamine diphosphate biosynthesis; thiamine phosphate from 4-amino-2-methyl-5-diphosphomethylpyrimidine and 4-methyl-5-(2-phosphoethyl)-thiazole: step 1/1. Functionally, condenses 4-methyl-5-(beta-hydroxyethyl)thiazole monophosphate (THZ-P) and 2-methyl-4-amino-5-hydroxymethyl pyrimidine pyrophosphate (HMP-PP) to form thiamine monophosphate (TMP). The chain is Thiamine-phosphate synthase from Laribacter hongkongensis (strain HLHK9).